Here is a 671-residue protein sequence, read N- to C-terminus: MEIFLAVLVLLALIASSNIINRFVPFIPVPLIQVGLGILVAAFPSGLHISLNPELFFVLFIAPLLFNDGKRTPRDELWKLRAPILLLALGLVFATVIVAGYTIHWMIPSIPLPAAFALAAILSPTDVVAVSALSSRVNMPKGIMRLLEGEGLMNDASGLVAFKFAIAATVTGAFSIAEASFSFVLIAAGGLLTGFILSFFIIRFRYFLRRLGMDDVTMHIILQILTPFVIYLAAEEIGVSGILAVVAGGVTHAIEQDRMEANLAKLQIASSNTWNIILFILNGLVFVILGLQIPDVSTVIFQDEAFNNMQVITYILIITLCLMILRFLWVWLFWAGKWSATKKQNVKKPKLRASMLMTFSGVRGAVTLAGAFSIPFTLADGSPFPERHLIIFLAAGVILCTLILASVLLPLLSEKKDKQIAVDLDTKIQHAKRKLLRSAIKTLREGMNEDNREVSLALINDYRMKLRNIQREPYQFGMRRQEKKIRLHGIKAEQMKLQQLIEEEKIDQQEAYELQERFHELEMLYSNSFKIRFSKVKFLRLLQWLQLWRPNQLVSSGILENEDSYKQIRKKTAEAAVDSIKQHMNDENKQTCHQVIGFYNQVIYRCEHGPSFFQQKDRSFDRKKKELNFQAVQTIRNEIQTLYENGEINRDIAHHLREYINDMEAVLLTNT.

11 consecutive transmembrane segments (helical) span residues 7-29 (VLVLLALIASSNIINRFVPFIPV), 46-66 (GLHISLNPELFFVLFIAPLLF), 83-103 (PILLLALGLVFATVIVAGYTI), 110-130 (IPLPAAFALAAILSPTDVVAV), 156-176 (ASGLVAFKFAIAATVTGAFSI), 182-202 (SFVLIAAGGLLTGFILSFFII), 228-248 (FVIYLAAEEIGVSGILAVVAG), 276-296 (IILFILNGLVFVILGLQIPDV), 315-335 (ILIITLCLMILRFLWVWLFWA), 364-384 (GAVTLAGAFSIPFTLADGSPF), and 389-409 (LIIFLAAGVILCTLILASVLL).

Belongs to the monovalent cation:proton antiporter 1 (CPA1) transporter (TC 2.A.36) family. Nhak (TC 2.A.36.3.2) subfamily.

Its subcellular location is the cell membrane. Transporter involved in the efflux of sodium, potassium, lithium and rubidium. The sequence is that of Sodium, potassium, lithium and rubidium/H(+) antiporter (nhaK) from Bacillus pumilus (strain SAFR-032).